The following is a 714-amino-acid chain: MSVNDQITHIGKTLSTTASAFLNYQKSNSNTQDVLTNNGPYKNLLSNTVNNASSTSYFYKRTEHGRFVKNASNTFEDIYSKTRRGDVFRNKFTDNKTCFRMLTYISDDLLNEIPTKEGLKSDADGKLLTEGGENENLRKNASKKETSLFQGFKSYLPIAELAIENTERLNYDTNGTSGTVGAKDVMSKTNERDEIHTELPNFQDSFLIPPGVETKKISSSYSPSALKSFSQTLVNSLEFLNIQKNSTLSEIRDIEVEVENLRQKKEKLLGKIANIEQNQLLLEDNLKQIDDRLDFLEEYGLEVIEANSDENAEDDGMSERKALKNDAIRNEGVTTESISSEASNLPPRRRQQLRDDNSLNRLGAFYSKSKKRHRKSFPTFQQLYEPGTKIGSIMSTHDDFLTCLDFDAPFGTLCTAGYLDHTVKIWDLSKQNKIGELAGHLATINCMQINRDYGTLVTGGRDAALKLWNLNLAQQLYQETQNLTSPTNHIDSPCVYTFEAHTDEVTALSLDPSFLVSGSQDRTIRQWDLRSGKCLQTIDLSFANVLTTSTNVDLSKSTLLTQRNERPSIGALQSFDAALATGTKDGVVRLWDLRSGKVIRTLKGHTDAITSLKFDSACLVTGSYDRTVRIWDLRTGLLNKFHAYSAPVLSLDLFQENAAVVVADEPSVQIYDSEKDESWSCVEQGNETSVSTVKYKENYMVEGRENGDVNIWAV.

Positions 240–298 form a coiled coil; the sequence is LNIQKNSTLSEIRDIEVEVENLRQKKEKLLGKIANIEQNQLLLEDNLKQIDDRLDFLEE. The interval 323-354 is disordered; it reads LKNDAIRNEGVTTESISSEASNLPPRRRQQLR. The segment covering 332–343 has biased composition (polar residues); it reads GVTTESISSEAS. Phosphoserine is present on S376. WD repeat units lie at residues 396-436, 439-478, 500-539, 561-603, 604-642, 644-681, and 685-714; these read THDD…KIGE, GHLATINCMQINRDYGTLVTGGRDAALKLWNLNLAQQLYQ, AHTDEVTALSLDPSFLVSGSQDRTIRQWDLRSGKCLQTID, TQRN…RTLK, GHTDAITSLKFDSACLVTGSYDRTVRIWDLRTGLLNKFH, YSAPVLSLDLFQENAAVVVADEPSVQIYDSEKDESWSC, and GNETSVSTVKYKENYMVEGRENGDVNIWAV.

Belongs to the WD repeat MDV1/CAF4 family. Interacts with CAF4, DNM1 and FIS1, components of the mitochondrial fission machinery. Interacts via its N-terminal, coiled-coil extension (NTE) with FIS1, and via its WD repeats with DNM1.

The protein resides in the mitochondrion outer membrane. In terms of biological role, involved in mitochondrial fission. Has a partially redundant function to CAF4 in acting as an adapter protein, binding to FIS1 on the mitochondrial outer membrane and recruiting the dynamin-like GTPase DNM1 to form mitochondrial fission complexes. Formation of these complexes is required to promote constriction and fission of the mitochondrial compartment at a late step in mitochondrial division. This Saccharomyces cerevisiae (strain YJM789) (Baker's yeast) protein is Mitochondrial division protein 1 (MDV1).